Here is a 221-residue protein sequence, read N- to C-terminus: Small ribosomal subunit protein uS5 (221 aa).

Residues 46–109 (IKDEVIDIKR…INAKLNIMEI (64 aa)) form the S5 DRBM domain.

It belongs to the universal ribosomal protein uS5 family. As to quaternary structure, part of the 30S ribosomal subunit. Contacts protein S4.

Functionally, with S4 and S12 plays an important role in translational accuracy. The protein is Small ribosomal subunit protein uS5 of Thermoplasma volcanium (strain ATCC 51530 / DSM 4299 / JCM 9571 / NBRC 15438 / GSS1).